The sequence spans 732 residues: Catalase-peroxidase (732 aa).

Positions 1–21 (MSMAEMRCPFSGHGAATTPAS) are disordered. Residues 1-22 (MSMAEMRCPFSGHGAATTPASA) form the signal peptide. A cross-link (tryptophyl-tyrosyl-methioninium (Trp-Tyr) (with M-246)) is located at residues 97–220 (WHSAGTYRLA…LAATEMGLIY (124 aa)). The active-site Proton acceptor is the His-98. The tryptophyl-tyrosyl-methioninium (Tyr-Met) (with W-97) cross-link spans 220–246 (YVNPEGPHGEPDPVASGREVRDTFARM). Residue His-261 coordinates heme b.

The protein belongs to the peroxidase family. Peroxidase/catalase subfamily. As to quaternary structure, homodimer or homotetramer. Requires heme b as cofactor. In terms of processing, formation of the three residue Trp-Tyr-Met cross-link is important for the catalase, but not the peroxidase activity of the enzyme.

It catalyses the reaction H2O2 + AH2 = A + 2 H2O. It carries out the reaction 2 H2O2 = O2 + 2 H2O. Bifunctional enzyme with both catalase and broad-spectrum peroxidase activity. The chain is Catalase-peroxidase from Synechococcus sp. (strain RCC307).